We begin with the raw amino-acid sequence, 371 residues long: Peptide chain release factor 2 (371 aa).

At glutamine 252 the chain carries N5-methylglutamine.

Belongs to the prokaryotic/mitochondrial release factor family. In terms of processing, methylated by PrmC. Methylation increases the termination efficiency of RF2.

It is found in the cytoplasm. In terms of biological role, peptide chain release factor 2 directs the termination of translation in response to the peptide chain termination codons UGA and UAA. This is Peptide chain release factor 2 from Staphylococcus haemolyticus (strain JCSC1435).